Consider the following 177-residue polypeptide: NADH-quinone oxidoreductase subunit B (177 aa).

4 residues coordinate [4Fe-4S] cluster: Cys-56, Cys-57, Cys-121, and Cys-151.

This sequence belongs to the complex I 20 kDa subunit family. In terms of assembly, NDH-1 is composed of 14 different subunits. Subunits NuoB, C, D, E, F, and G constitute the peripheral sector of the complex. Requires [4Fe-4S] cluster as cofactor.

Its subcellular location is the cell inner membrane. It carries out the reaction a quinone + NADH + 5 H(+)(in) = a quinol + NAD(+) + 4 H(+)(out). Functionally, NDH-1 shuttles electrons from NADH, via FMN and iron-sulfur (Fe-S) centers, to quinones in the respiratory chain. Couples the redox reaction to proton translocation (for every two electrons transferred, four hydrogen ions are translocated across the cytoplasmic membrane), and thus conserves the redox energy in a proton gradient. The polypeptide is NADH-quinone oxidoreductase subunit B (Ruegeria pomeroyi (strain ATCC 700808 / DSM 15171 / DSS-3) (Silicibacter pomeroyi)).